The sequence spans 396 residues: L-lactate dehydrogenase (396 aa).

In terms of domain architecture, FMN hydroxy acid dehydrogenase spans 1–380 (MIISAASDYR…SGDSLVQELG (380 aa)). Residue Tyr24 participates in substrate binding. Residues Ser106 and Gln127 each contribute to the FMN site. Tyr129 contributes to the substrate binding site. Position 155 (Thr155) interacts with FMN. Arg164 serves as a coordination point for substrate. Lys251 is an FMN binding site. Residue His275 is the Proton acceptor of the active site. Arg278 is a substrate binding site. 306 to 330 (DSGIRNGLDVVRMIALGADTVLLGR) serves as a coordination point for FMN.

Belongs to the FMN-dependent alpha-hydroxy acid dehydrogenase family. The cofactor is FMN.

Its subcellular location is the cell inner membrane. The enzyme catalyses (S)-lactate + A = pyruvate + AH2. In terms of biological role, catalyzes the conversion of L-lactate to pyruvate. Is coupled to the respiratory chain. The protein is L-lactate dehydrogenase of Salmonella paratyphi A (strain ATCC 9150 / SARB42).